Reading from the N-terminus, the 390-residue chain is Alanine racemase (390 aa).

The active-site Proton acceptor; specific for D-alanine is Lys46. Residue Lys46 is modified to N6-(pyridoxal phosphate)lysine. Position 144 (Arg144) interacts with substrate. Tyr275 functions as the Proton acceptor; specific for L-alanine in the catalytic mechanism. Met323 is a substrate binding site.

The protein belongs to the alanine racemase family. Pyridoxal 5'-phosphate is required as a cofactor.

It catalyses the reaction L-alanine = D-alanine. It participates in amino-acid biosynthesis; D-alanine biosynthesis; D-alanine from L-alanine: step 1/1. In terms of biological role, catalyzes the interconversion of L-alanine and D-alanine. May also act on other amino acids. This is Alanine racemase (alr) from Mycolicibacterium vanbaalenii (strain DSM 7251 / JCM 13017 / BCRC 16820 / KCTC 9966 / NRRL B-24157 / PYR-1) (Mycobacterium vanbaalenii).